Consider the following 398-residue polypeptide: MSEQLLTASTPIDAAPLSDNTVQTTAPATSKINLLDLNRQQMREFFAEMGEKPFRADQVMKWMYHYCYDDFEQMTDINKGLRAKLQRVAEIRAPEVAEEQRSVDGTIKWAIKVGDQQVETVYIPEADRATLCVSSQVGCALECKFCSTAQQGFNRNLRVSEIIGQVWRAAKIIGSLKSTGTRPITNVVMMGMGEPLLNLNNVVPAMDIMMDDFGFGLSKRRVTLSTSGVVPALDKLGDMIDVALAISLHAPTDDIRDEIVPINRKYNIETFLAAVRRYLDKSKANGGRVTVEYVMLDHINDSTEQAHQLAECLKDTPCKINLIPWNPFPGAPYGRSSNSRVDRFSKVLMEYGFTTIVRKTRGDDIDAACGQLAGEVIDRTKRTLKKKMAGEPIAIKTV.

Catalysis depends on Glu119, which acts as the Proton acceptor. The Radical SAM core domain maps to 125-364; it reads EADRATLCVS…TIVRKTRGDD (240 aa). A disulfide bridge connects residues Cys132 and Cys369. [4Fe-4S] cluster is bound by residues Cys139, Cys143, and Cys146. S-adenosyl-L-methionine contacts are provided by residues 193–194, Ser225, 247–249, and Asn326; these read GE and SLH. Cys369 (S-methylcysteine intermediate) is an active-site residue.

It belongs to the radical SAM superfamily. RlmN family. The cofactor is [4Fe-4S] cluster.

It is found in the cytoplasm. It carries out the reaction adenosine(2503) in 23S rRNA + 2 reduced [2Fe-2S]-[ferredoxin] + 2 S-adenosyl-L-methionine = 2-methyladenosine(2503) in 23S rRNA + 5'-deoxyadenosine + L-methionine + 2 oxidized [2Fe-2S]-[ferredoxin] + S-adenosyl-L-homocysteine. The enzyme catalyses adenosine(37) in tRNA + 2 reduced [2Fe-2S]-[ferredoxin] + 2 S-adenosyl-L-methionine = 2-methyladenosine(37) in tRNA + 5'-deoxyadenosine + L-methionine + 2 oxidized [2Fe-2S]-[ferredoxin] + S-adenosyl-L-homocysteine. In terms of biological role, specifically methylates position 2 of adenine 2503 in 23S rRNA and position 2 of adenine 37 in tRNAs. m2A2503 modification seems to play a crucial role in the proofreading step occurring at the peptidyl transferase center and thus would serve to optimize ribosomal fidelity. This Yersinia pestis protein is Dual-specificity RNA methyltransferase RlmN.